We begin with the raw amino-acid sequence, 387 residues long: Leucine aminopeptidase 1 (387 aa).

The signal sequence occupies residues 1–18 (MKIRAALALSATASGVLA). Positions 19–87 (AVVPQQALLN…YPTLHQASNV (69 aa)) are excised as a propeptide. An N-linked (GlcNAc...) asparagine glycan is attached at Asn-179. Residues His-187, Asp-206, Glu-245, and Asp-272 each contribute to the Zn(2+) site. Cys-321 and Cys-325 are disulfide-bonded. Position 354 (His-354) interacts with Zn(2+).

The protein belongs to the peptidase M28 family. M28E subfamily. As to quaternary structure, monomer. The cofactor is Zn(2+).

The protein localises to the secreted. Extracellular aminopeptidase that allows assimilation of proteinaceous substrates. This Aspergillus oryzae (strain ATCC 42149 / RIB 40) (Yellow koji mold) protein is Leucine aminopeptidase 1 (lap1).